Consider the following 361-residue polypeptide: Peptide chain release factor 1 (361 aa).

Glutamine 235 carries the post-translational modification N5-methylglutamine.

Belongs to the prokaryotic/mitochondrial release factor family. Methylated by PrmC. Methylation increases the termination efficiency of RF1.

Its subcellular location is the cytoplasm. In terms of biological role, peptide chain release factor 1 directs the termination of translation in response to the peptide chain termination codons UAG and UAA. The sequence is that of Peptide chain release factor 1 from Buchnera aphidicola subsp. Schizaphis graminum (strain Sg).